Reading from the N-terminus, the 1031-residue chain is NACHT, LRR and PYD domains-containing protein 3 (1031 aa).

Residues 1–93 (MRMVSVRCKL…YEKAKREEPE (93 aa)) form the Pyrin domain. A Phosphoserine modification is found at serine 5. Position 13 is a phosphotyrosine (tyrosine 13). The S-palmitoyl cysteine moiety is linked to residue cysteine 125. The tract at residues 126-129 (RKKK) is required for binding to phosphatidylinositol 4-phosphate (PtdIns4P). 3 positions are modified to phosphotyrosine: tyrosine 131, tyrosine 135, and tyrosine 138. One can recognise an FISNA domain in the interval 135–207 (YRKYVRSKFQ…SSVNLELLFD (73 aa)). Serine 156 is modified (phosphoserine). Threonine 164 is a binding site for ATP. Residues serine 195 and serine 198 each carry the phosphoserine modification. Residues 217 to 533 (HTVVFQGAAG…EFFAAMYYLL (317 aa)) enclose the NACHT domain. 223–230 (GAAGIGKT) provides a ligand contact to ATP. 2 positions are modified to phosphoserine: serine 262 and serine 292. A Glycyl lysine isopeptide (Lys-Gly) (interchain with G-Cter in ubiquitin) cross-link involves residue lysine 321. Position 331 is a phosphoserine (serine 331). The KFERQ-like motif 1 signature appears at 352-356 (LEKLQ). Lysine 427 is covalently cross-linked (Glycyl lysine isopeptide (Lys-Gly) (interchain with G-Cter in ubiquitin)). An ATP-binding site is contributed by histidine 519. The short motif at 601 to 605 (KIRLE) is the KFERQ-like motif 2 element. Lysine 687 participates in a covalent cross-link: Glycyl lysine isopeptide (Lys-Gly) (interchain with G-Cter in ubiquitin). 2 positions are modified to phosphoserine: serine 723 and serine 730. LRR repeat units follow at residues 737-757 (NLTE…NVLC), 766-787 (NIRR…NISS), 794-814 (KLVE…RLLC), 823-844 (NLKK…DLAS), and 851-871 (SLTR…GILC). The KFERQ-like motif 3 motif lies at 793–797 (QKLVE). Serine 801 carries the phosphoserine modification. Residues cysteine 832, cysteine 833, and cysteine 839 are each lipidated (S-palmitoyl cysteine). Tyrosine 856 is modified (phosphotyrosine). A Glycyl lysine isopeptide (Lys-Gly) (interchain with G-Cter in ubiquitin) cross-link involves residue lysine 873. 4 LRR repeats span residues 880–901 (NLQK…ALSS), 908–929 (NLTH…LLCE), 937–958 (KLQV…DLST), and 965–986 (SLRK…LLCE). A lipid anchor (S-palmitoyl cysteine) is attached at cysteine 953. Lysine 968 is covalently cross-linked (Glycyl lysine isopeptide (Lys-Gly) (interchain with G-Cter in ubiquitin)). The KFERQ-like motif 4 motif lies at 986–990 (EVLKQ). Residue serine 1030 is modified to Phosphoserine.

Belongs to the NLRP family. As to quaternary structure, sensor component of NLRP3 inflammasomes; inflammasomes are supramolecular complexes that assemble in the cytosol in response to pathogens and other damage-associated signals and play critical roles in innate immunity and inflammation. The core of NLRP3 inflammasomes consists of a signal sensor component (NLRP3), an adapter (PYCARD/ASC), which recruits an effector pro-inflammatory caspase (CASP1 and, possibly, CASP4 and CASP5). Homodecamer; inactive NLRP3 forms homodecameric double-ring cages that hide pyrin domains within NACHT-LRR rings to avoid premature activation. Interacts (via pyrin domain) with PYCARD/ASC (via pyrin domain); interaction is direct. Interacts (via LRR repeat domain) with NEK7 (via N-terminus); the interaction is required for the formation of the complex NLRP3:PYCARD, oligomerization of PYCARD/ASC and activation of CASP1. Interacts (via LRR repeat domain) with NR4A1/Nur77 (via N-terminus); the interaction is direct, requires activation of NR4A1 by its ligands NBRE-containing dsDNA and lipopolysaccharide, and stimulates the association of NLRP3 with NEK7 for non-canonical NLRP3 inflammasome activation. Interacts with CARD8; leading to inhibit formation of the NLRP3 inflammasome. Interacts with MEFV; this interaction targets NLRP3 to degradation by autophagy, hence preventing excessive IL1B- and IL18-mediated inflammation. Interacts with EIF2AK2/PKR; this interaction requires EIF2AK2 activity, is accompanied by EIF2AK2 autophosphorylation and promotes inflammasome assembly in response to specific stimuli. Interacts with GBP5 (via DAPIN domain); this interaction promotes inflammasome assembly in response to microbial and soluble, but not crystalline, agents. Interacts with PML (isoform PML-1) (via the leucine-rich repeat (LRR) domain); PML-mediated increase in NLRP3 inflammasome activation does not depend upon this interaction. Interacts (via NACHT domain) with DHX33 (via DEAH box); NLRP3 activation in presence of cytosolic dsRNA is mediated by DHX33. Interacts (via NACHT and LRR domains) with ARRB2; this interaction is direct and inducible by polyunsaturated fatty acids (PUFAs). Interacts (via NACHT domain) with DDX3X under both LPS-primed and inflammasome-activating conditions. Interacts with IRF4 (via the LRR domain); this interaction is direct and is required for optimal IRF4 binding to IL4 promoter and efficient IL4 transactivation during differentiation of Th2 helper T-cells. Interacts with MAVS; promoting localization to mitochondria and activation of the NLRP3 inflammasome. Interacts with MARK4; promoting localization of NLRP3 to the microtubule organizing center (MTOC). Interacts with TRIM50; this interaction also promotes NLRP3 oligomerization and subsequent inflammasome activation. Interacts with IRGM; preventing NLRP3 inflammasome assembly and promoting NLRP3 degradation. Interacts (via KFERQ-like motifs) with HSPA8/HSC70; promoting NLRP3 degradation by the chaperone-mediated autophagy pathway. Interacts (via NACHT and LLR domains) with ABHD8; this interaction is enhanced in the presence of NLRP3 inflammasome inducers, such as ATP, nigericin, silica, or alum. Interaction with ABHD8 leads the recruitment of ZDHHC12, hence facilitating NLRP3 palmitoylation and degradation by the chaperone-mediated autophagy pathway (CMA), therefore attenuating NLRP3 inflammasome activation. In terms of processing, phosphorylation at Ser-198 by MAPK8/JNK1 increases inflammasome activation by promoting deubiquitination by BRCC3 and NLRP3 homooligomerization. Phosphorylation at Ser-801 by CSNK1A1 prevents inflammasome activation by preventing NEK7 recruitment. Phosphorylation at Ser-5 in the pyrin domain inhibits homomultimerization of NLRP3 and activation of the NLRP3 inflammasome: dephosphorylation by protein phosphatase 2A (PP2A) promotes assembly of the NLRP3 inflammasome. Phosphorylation at Ser-292 by PKD/PRKD1 promotes NLRP3 inflammasome assembly. Phosphorylation by ERK1/MAPK3 promotes NLRP3 inflammasome assembly. Phosphorylation by BTK (at Tyr-131, Tyr-135 and Tyr-138) in the region that mediates binding to phosphatidylinositol phosphate, promotes relocalization of NLRP3 and assembly of the NLRP3 inflammasome. Phosphorylation at Tyr-856 inhibits NLRP3 inflammasome assembly: dephosphorylation by PTPN22 promotes inflammasome activation. Phosphorylated by LATS1 and LATS2 at Ser-262 following palmitoylation by ZDHHC1, promoting its relocalization to the microtubule organizing center (MTOC), where NLRP3 is activated by NEK7, leading to inflammasome assembly and activation. Post-translationally, ubiquitinated; undergoes both 'Lys-48'- and 'Lys-63'-linked polyubiquitination. Ubiquitination does not lead to degradation, but inhibits inflammasome activation. Deubiquitination is catalyzed by BRCC3 and associated with NLRP3 activation and inflammasome assembly. This process can be induced by the activation of Toll-like receptors (by LPS), through a non-transcriptional pathway dependent on the mitochondrial production of reactive oxygen species, and by ATP. Ubiquitinated by TRIM31 via 'Lys-48'-linked ubiquitination, leading to its degradation by the proteasome. Ubiquitinated at Lys-687 by the SCF(FBXL2) complex, leading to its degradation by the proteasome. Ubiquitinated by TRIM35 via 'lys-48' and 'Lys-63'-linked ubiquitination leading to inhibition of NLRP3 inflammasome activation. Undergoes 'Lys-27'-linked polyubiquitination by MARCHF5, leading to NLRP3-NEK7 complex formation and NLRP3 oligomerization. Palmitoylation by ZDHHC12 promotes NLRP3 degradation by the chaperone-mediated autophagy pathway (CMA) and therefore limits NLRP3 inflammasome activation. Interaction with ZDHHC12, and hence NLRP3 palmitoylation, is greatly enhanced by ABHD8. Following palmitoylation, HSPA8/HSC70 recognizes and binds the KFERQ-like motifs on NLRP3 and promotes NLRP3 recruitment to lysosomes, where it is degraded via the chaperone-mediated autophagy pathway in a LAMP2-dependent process. Palmitoylation at Cys-832 and Cys-833 by ZDHHC5 enhances its binding to NEK7 leading to inflammasome assembly and activation. Palmitoylation at Cys-125 and Cys-953 by ZDHHC1 facilitates phosphorylation at Ser-262 by LATS1 and LATS2, promoting its relocalization to the microtubule organizing center (MTOC), where NLRP3 is activated by NEK7, leading to inflammasome assembly and activation. Depalmitoylated by ABHD17A. In terms of processing, degraded via selective autophagy following interaction with IRGM. IRGM promotes NLRP3 recruitment to autophagosome membranes, promoting its SQSTM1/p62-dependent autophagy-dependent degradation.

The protein localises to the cytoplasm. It localises to the cytosol. It is found in the inflammasome. Its subcellular location is the cytoskeleton. The protein resides in the microtubule organizing center. The protein localises to the golgi apparatus membrane. It localises to the endoplasmic reticulum. It is found in the mitochondrion. Its subcellular location is the secreted. The protein resides in the nucleus. The catalysed reaction is ATP + H2O = ADP + phosphate + H(+). Under resting conditions, NLRP3 binds ADP and is autoinhibited. Inactive NLRP3 forms homodecameric double-ring cages that hide pyrin domains within NACHT-LRR rings to avoid premature activation. NLRP3 activation stimuli include extracellular ATP, nigericin, reactive oxygen species, crystals of monosodium urate or cholesterol, amyloid-beta fibers, environmental or industrial particles and nanoparticles, such as asbestos, silica, aluminum salts, cytosolic dsRNA, etc. Almost all stimuli trigger intracellular K(+) efflux. These stimuli lead to membrane perturbations that induce activation of NLRP3. Upon activation, NLRP3 is transported to microtubule organizing center (MTOC), where it is unlocked by NEK7, leading to its relocalization to dispersed trans-Golgi network (dTGN) vesicle membranes and recruitment of PYCARD/ASC for the formation of an active inflammasome complex. NEK7-activated NLRP3 forms a disk-shaped inflammasome. NLRP3 and PYCARD/ASC interact via their respective pyrin domains; interaction initiates speck formation (nucleation) which greatly enhances further addition of soluble PYCARD/ASC molecules to the speck in a prion-like polymerization process. Clustered PYCARD/ASC nucleates the formation of CASP1 filaments through the interaction of their respective CARD domains, acting as a platform for CASP1 polymerization and activation. Active CASP1 then processes IL1B and IL18 precursors, leading to the release of mature cytokines in the extracellular milieu and inflammatory response. NLRP3 inflammasome assembly is inhibited by IRGM, which impedes NLRP3 oligomerization. NLRP3 inflammasome is inhibited by cyclic AMP (cAMP), which directly binds NLRP3; inhibition is relieved by calcium-sensing receptor CASR, which inhibits production of cAMP. Specifically inhibited by sulfonylurea MCC950 (also named CP-456,773, CRID3), a potent and specific small-molecule inhibitor of the NLRP3 inflammasome that acts by preventing ATP hydrolysis. Its function is as follows. Sensor component of the NLRP3 inflammasome, which mediates inflammasome activation in response to defects in membrane integrity, leading to secretion of inflammatory cytokines IL1B and IL18 and pyroptosis. In response to pathogens and other damage-associated signals that affect the integrity of membranes, initiates the formation of the inflammasome polymeric complex composed of NLRP3, CASP1 and PYCARD/ASC. Recruitment of pro-caspase-1 (proCASP1) to the NLRP3 inflammasome promotes caspase-1 (CASP1) activation, which subsequently cleaves and activates inflammatory cytokines IL1B and IL18 and gasdermin-D (GSDMD), promoting cytokine secretion and pyroptosis. Activation of NLRP3 inflammasome is also required for HMGB1 secretion; stimulating inflammatory responses. Under resting conditions, ADP-bound NLRP3 is autoinhibited. NLRP3 activation stimuli include extracellular ATP, nigericin, reactive oxygen species, crystals of monosodium urate or cholesterol, amyloid-beta fibers, environmental or industrial particles and nanoparticles, such as asbestos, silica, aluminum salts, cytosolic dsRNA, etc. Almost all stimuli trigger intracellular K(+) efflux. These stimuli lead to membrane perturbation and activation of NLRP3. Upon activation, NLRP3 is transported to microtubule organizing center (MTOC), where it is unlocked by NEK7, leading to its relocalization to dispersed trans-Golgi network (dTGN) vesicle membranes and formation of an active inflammasome complex. Associates with dTGN vesicle membranes by binding to phosphatidylinositol 4-phosphate (PtdIns4P). Shows ATPase activity. Independently of inflammasome activation, regulates the differentiation of T helper 2 (Th2) cells and has a role in Th2 cell-dependent asthma and tumor growth. During Th2 differentiation, required for optimal IRF4 binding to IL4 promoter and for IRF4-dependent IL4 transcription. Binds to the consensus DNA sequence 5'-GRRGGNRGAG-3'. May also participate in the transcription of IL5, IL13, GATA3, CCR3, CCR4 and MAF. The protein is NACHT, LRR and PYD domains-containing protein 3 (NLRP3) of Bos taurus (Bovine).